The following is a 339-amino-acid chain: Retroviral-like aspartic protease 1 (339 aa).

The propeptide occupies 1 to 188 (MRNPGGPGWA…SEPEEILFAN (188 aa)). Positions 34–53 (VPAPFNSSRQGKNTAQPTEP) are disordered. Over residues 38–53 (FNSSRQGKNTAQPTEP) the composition is skewed to polar residues. N-linked (GlcNAc...) asparagine glycosylation occurs at Asn-39. The chain crosses the membrane as a helical span at residues 55 to 75 (LSSVIAPTLFCAFLYLACVTA). One can recognise a Peptidase A2 domain in the interval 205-286 (VRFLVDSGAQ…AEEAIIGTDV (82 aa)). Residue Asp-210 is part of the active site. Asn-274 carries an N-linked (GlcNAc...) asparagine glycan. A propeptide spanning residues 325 to 339 (LIEEEEGSSAPEGSH) is cleaved from the precursor.

In terms of assembly, homodimer. Undergoes autocleavage which is necessary for activation of the protein. In terms of tissue distribution, highly expressed in stratified epithelia in skin, tongue, esophagus, forestomach and vagina. Also expressed in trachea, urinary bladder and thymus. Undetectable in simple epithelia. Within the epidermis, expressed exclusively in the granular layer (at protein level). Levels are elevated in benign skin tumors but are down-regulated in squamous cell carcinomas.

It localises to the membrane. Functionally, protease responsible for filaggrin processing, essential for the maintenance of a proper epidermis organization. The polypeptide is Retroviral-like aspartic protease 1 (Mus musculus (Mouse)).